Consider the following 591-residue polypeptide: Aspartate--tRNA ligase (591 aa).

Glu173 contacts L-aspartate. Positions 197 to 200 are aspartate; that stretch reads QLFK. Residue Arg219 coordinates L-aspartate. ATP is bound by residues 219–221 and Gln228; that span reads RDE. Residue His448 coordinates L-aspartate. Glu482 serves as a coordination point for ATP. Arg489 is a binding site for L-aspartate. 534-537 serves as a coordination point for ATP; sequence GLDR.

This sequence belongs to the class-II aminoacyl-tRNA synthetase family. Type 1 subfamily. Homodimer.

It localises to the cytoplasm. The catalysed reaction is tRNA(Asp) + L-aspartate + ATP = L-aspartyl-tRNA(Asp) + AMP + diphosphate. Its function is as follows. Catalyzes the attachment of L-aspartate to tRNA(Asp) in a two-step reaction: L-aspartate is first activated by ATP to form Asp-AMP and then transferred to the acceptor end of tRNA(Asp). In Shewanella frigidimarina (strain NCIMB 400), this protein is Aspartate--tRNA ligase.